We begin with the raw amino-acid sequence, 48 residues long: Large ribosomal subunit protein eL40 (48 aa).

It belongs to the eukaryotic ribosomal protein eL40 family.

This is Large ribosomal subunit protein eL40 from Methanospirillum hungatei JF-1 (strain ATCC 27890 / DSM 864 / NBRC 100397 / JF-1).